The following is a 388-amino-acid chain: Succinate--CoA ligase [ADP-forming] subunit beta (388 aa).

In terms of domain architecture, ATP-grasp spans Lys-9–Glu-244. ATP contacts are provided by residues Lys-46, Gly-53–Gly-55, Glu-99, Ala-102, and Glu-107. Mg(2+) is bound by residues Asn-199 and Asp-213. Substrate contacts are provided by residues Asn-264 and Gly-321–Met-323.

Belongs to the succinate/malate CoA ligase beta subunit family. Heterotetramer of two alpha and two beta subunits. It depends on Mg(2+) as a cofactor.

The catalysed reaction is succinate + ATP + CoA = succinyl-CoA + ADP + phosphate. It catalyses the reaction GTP + succinate + CoA = succinyl-CoA + GDP + phosphate. It functions in the pathway carbohydrate metabolism; tricarboxylic acid cycle; succinate from succinyl-CoA (ligase route): step 1/1. Succinyl-CoA synthetase functions in the citric acid cycle (TCA), coupling the hydrolysis of succinyl-CoA to the synthesis of either ATP or GTP and thus represents the only step of substrate-level phosphorylation in the TCA. The beta subunit provides nucleotide specificity of the enzyme and binds the substrate succinate, while the binding sites for coenzyme A and phosphate are found in the alpha subunit. The sequence is that of Succinate--CoA ligase [ADP-forming] subunit beta from Herminiimonas arsenicoxydans.